The chain runs to 2242 residues: DEP domain-containing protein DDB_G0279099 (2242 aa).

Disordered stretches follow at residues Ser-388–Ser-465, Asp-576–Val-644, Pro-701–Lys-730, Asp-871–Ser-965, Gln-1077–Ser-1194, Gly-1287–Ser-1336, Ser-1384–Glu-1414, Ala-1446–Gly-1471, and Ser-1502–Asn-1521. Positions Ile-392–Asn-440 form a coiled coil. Over residues Gly-581–Asp-614 the composition is skewed to low complexity. The span at Glu-622–Asp-631 shows a compositional bias: acidic residues. Composition is skewed to polar residues over residues Asn-632–Ser-642 and His-719–Gln-729. Positions Pro-872–Ser-955 are enriched in low complexity. Positions Ile-1066–Phe-1101 form a coiled coil. The span at Gln-1082–Ser-1106 shows a compositional bias: basic and acidic residues. Composition is skewed to low complexity over residues Ser-1108–Ala-1182 and Gly-1287–Ser-1299. The segment covering Ala-1300–Ile-1311 has biased composition (polar residues). 3 stretches are compositionally biased toward low complexity: residues Asn-1312–Ser-1336, Ser-1384–Asn-1410, and Ala-1446–Ser-1470. A DEP domain is found at Ile-1556–Glu-1629. Positions Thr-1645–Ser-1668 are enriched in low complexity. Disordered stretches follow at residues Thr-1645–Asn-1763, Asp-1803–Gln-1910, Asn-2122–Lys-2145, and Asn-2165–Met-2218. Polar residues predominate over residues Ile-1669–Leu-1702. Low complexity-rich tracts occupy residues Ser-1703 to Ser-1760 and Gly-1807 to Ser-1848. Residues Leu-1791–Asn-1821 adopt a coiled-coil conformation. Composition is skewed to polar residues over residues Gly-1849–Leu-1871 and Tyr-1879–His-1889. 2 stretches are compositionally biased toward low complexity: residues Gln-1890 to Gln-1910 and Asn-2122 to Asn-2133. 2 stretches are compositionally biased toward basic and acidic residues: residues Ser-2166–His-2181 and Asp-2192–Met-2218.

It in the N-terminal section; belongs to the IML1 family.

This is DEP domain-containing protein DDB_G0279099 from Dictyostelium discoideum (Social amoeba).